A 403-amino-acid chain; its full sequence is uncharacterized protein (403 aa).

His81 contacts Zn(2+). Asp83 is a catalytic residue. Zn(2+) is bound at residue Asp114. Glu148 serves as the catalytic Proton acceptor. Glu149, Glu174, and His374 together coordinate Zn(2+).

It belongs to the peptidase M20A family. It depends on Zn(2+) as a cofactor. Requires Co(2+) as cofactor.

This is an uncharacterized protein from Escherichia coli O157:H7.